The sequence spans 325 residues: GMP reductase (325 aa).

Cys-173 serves as the catalytic Thioimidate intermediate. NADP(+) is bound at residue 202 to 225 (IIADGGIRHHGDIAKSVRFGAAMV).

The protein belongs to the IMPDH/GMPR family. GuaC type 2 subfamily.

The enzyme catalyses IMP + NH4(+) + NADP(+) = GMP + NADPH + 2 H(+). Its function is as follows. Catalyzes the irreversible NADPH-dependent deamination of GMP to IMP. It functions in the conversion of nucleobase, nucleoside and nucleotide derivatives of G to A nucleotides, and in maintaining the intracellular balance of A and G nucleotides. This chain is GMP reductase, found in Leptothrix cholodnii (strain ATCC 51168 / LMG 8142 / SP-6) (Leptothrix discophora (strain SP-6)).